A 156-amino-acid chain; its full sequence is Small ribosomal subunit protein uS7 (156 aa).

Belongs to the universal ribosomal protein uS7 family. Part of the 30S ribosomal subunit. Contacts proteins S9 and S11.

One of the primary rRNA binding proteins, it binds directly to 16S rRNA where it nucleates assembly of the head domain of the 30S subunit. Is located at the subunit interface close to the decoding center, probably blocks exit of the E-site tRNA. This is Small ribosomal subunit protein uS7 from Clavibacter michiganensis subsp. michiganensis (strain NCPPB 382).